We begin with the raw amino-acid sequence, 320 residues long: Putative FBD-associated F-box protein At3g60710 (320 aa).

Residues 2–48 (EDLISQLPNELLQEILLNLPTSESVRTSVLPTRWRNLWQSVPGLYLI) form the F-box domain. The 57-residue stretch at 212–268 (MEEIASSPVPKCLQTSIENVKIKMTPKADQEKSRKAETEVANYILENATLLKLTLWL) folds into the FBD domain.

This is Putative FBD-associated F-box protein At3g60710 from Arabidopsis thaliana (Mouse-ear cress).